A 248-amino-acid polypeptide reads, in one-letter code: Short-chain dehydrogenase/reductase iacG (248 aa).

Residues I14, N35, K41, D58, R120, and V187 each coordinate NADP(+).

The protein belongs to the short-chain dehydrogenases/reductases (SDR) family.

It participates in secondary metabolite biosynthesis. Functionally, short-chain dehydrogenase/reductase; part of the gene cluster that mediates the biosynthesis of iso-A82775C, a enylepoxycyclohexane and biosynthetic precursor of the chloropestolide anticancer natural products. Within the cluster, the prenyltransferase iacE prenylates siccayne to generate pestalodiol E, using dimethylallyl diphosphate (DMAPP) as cosubstrate. The probable oxidoreductase iacF is then involved in the epoxidation of pestalodiol F to pestalodiol F, which is further converted to pestalofone A by the short-chain dehydrogenase/reductase iacG. Iso-A82775C is subsequently generated from pestalofone A by the short-chain dehydrogenase/reductase iacC. Iso-A82775C is further condensed with maldoxin via a Diels-Alder reaction to produce the anticancer natural products chloropestolides A to E. This is Short-chain dehydrogenase/reductase iacG from Pestalotiopsis fici (strain W106-1 / CGMCC3.15140).